The sequence spans 360 residues: Photosystem II protein D1 2 (360 aa).

A run of 3 helical transmembrane segments spans residues 29-46 (YVGWFGVLMIPTLLTATI), 118-133 (HFLIGVFCYMGREWEL), and 142-156 (WICVAYSAPVAAATA). Residue H118 coordinates chlorophyll a. Y126 contacts pheophytin a. 2 residues coordinate [CaMn4O5] cluster: D170 and E189. Residues 197–218 (FHMLGVAGVFGGSLFSAMHGSL) traverse the membrane as a helical segment. A chlorophyll a-binding site is contributed by H198. A quinone contacts are provided by residues H215 and 264–265 (SF). A Fe cation-binding site is contributed by H215. Fe cation is bound at residue H272. A helical membrane pass occupies residues 274-288 (FLAAWPVVGIWFTSL). Residues H332, E333, D342, and A344 each coordinate [CaMn4O5] cluster. A propeptide spanning residues 345–360 (AGEATPVALTAPAING) is cleaved from the precursor.

It belongs to the reaction center PufL/M/PsbA/D family. In terms of assembly, PSII is composed of 1 copy each of membrane proteins PsbA, PsbB, PsbC, PsbD, PsbE, PsbF, PsbH, PsbI, PsbJ, PsbK, PsbL, PsbM, PsbT, PsbX, PsbY, PsbZ, Psb30/Ycf12, peripheral proteins PsbO, CyanoQ (PsbQ), PsbU, PsbV and a large number of cofactors. It forms dimeric complexes. The D1/D2 heterodimer binds P680, chlorophylls that are the primary electron donor of PSII, and subsequent electron acceptors. It shares a non-heme iron and each subunit binds pheophytin, quinone, additional chlorophylls, carotenoids and lipids. D1 provides most of the ligands for the Mn4-Ca-O5 cluster of the oxygen-evolving complex (OEC). There is also a Cl(-1) ion associated with D1 and D2, which is required for oxygen evolution. The PSII complex binds additional chlorophylls, carotenoids and specific lipids. serves as cofactor. Tyr-161 forms a radical intermediate that is referred to as redox-active TyrZ, YZ or Y-Z. In terms of processing, C-terminally processed by CtpA; processing is essential to allow assembly of the oxygen-evolving complex and thus photosynthetic growth.

Its subcellular location is the cellular thylakoid membrane. The enzyme catalyses 2 a plastoquinone + 4 hnu + 2 H2O = 2 a plastoquinol + O2. Its function is as follows. Photosystem II (PSII) is a light-driven water:plastoquinone oxidoreductase that uses light energy to abstract electrons from H(2)O, generating O(2) and a proton gradient subsequently used for ATP formation. It consists of a core antenna complex that captures photons, and an electron transfer chain that converts photonic excitation into a charge separation. The D1/D2 (PsbA/PsbD) reaction center heterodimer binds P680, the primary electron donor of PSII as well as several subsequent electron acceptors. This Synechococcus elongatus (strain ATCC 33912 / PCC 7942 / FACHB-805) (Anacystis nidulans R2) protein is Photosystem II protein D1 2.